Consider the following 474-residue polypeptide: PRAME family member 1 (474 aa).

The stretch at 97 to 124 (RWKLQVLDLRDVDENFWARWPGAWALSC) is one LRR 1; degenerate repeat. One copy of the LRR 2; degenerate repeat lies at 179–203 (HLCCSKLVNYLTPIKYLRKSLKIIY). The stretch at 204–230 (LNSIQELEIRNMSWPRLIRKLRCYLKE) is one LRR 3; degenerate repeat. The stretch at 231–265 (MKNLRKLVFSRCHHYTSDNELEGRLVAKFSSVFLR) is one LRR 4; degenerate repeat. LRR repeat units follow at residues 266-291 (LEHL…IRCL), 292-323 (QNPL…GYLK), 324-342 (HLNL…PLGA), 348-375 (AASL…GLSR), and 376-400 (CSQL…LLRH).

It belongs to the PRAME family.

In Homo sapiens (Human), this protein is PRAME family member 1.